The following is a 1403-amino-acid chain: Eukaryotic translation initiation factor 4 gamma (1403 aa).

3 stretches are compositionally biased toward polar residues: residues 1–11 (MSSKPPSNTPK), 19–39 (ASSQSNKSNSTKASENNTATA), and 50–60 (EPTNTSRANAQ). Disordered regions lie at residues 1-381 (MSSK…GSTP), 439-464 (SRSGSQVSDQVVESPNSSTLSPRNGF), 488-774 (VVVP…KRDL), and 861-1003 (AFSD…EALL). Ser83 carries the post-translational modification Phosphoserine. Polar residues predominate over residues 109–137 (DNTSKPSANSSAERTSSQHQKPETSSQIG). 2 stretches are compositionally biased toward low complexity: residues 190–208 (SGVSSYSSKSQSVNSSVTS) and 231–248 (PRPTTSASNTNTSPANGA). Residues 249-269 (PTNKPSTDINTTDPATQTTQV) are compositionally biased toward polar residues. The segment covering 270 to 291 (SASNSPALSGSSTPSNTSSRSN) has biased composition (low complexity). The segment covering 298 to 308 (FSEKRHYDRYG) has biased composition (basic and acidic residues). The segment covering 325–334 (NYNNSGNNRN) has biased composition (low complexity). 3 stretches are compositionally biased toward polar residues: residues 346 to 381 (RNYNNQGAYPTYMSNGRSANQSPRNNPQNVNNGSTP), 439 to 460 (SRSGSQVSDQVVESPNSSTLSP), and 493 to 508 (KNASSPNPSETNSRAE). Phosphoserine is present on residues Ser452, Ser455, Ser456, and Ser459. The segment covering 537–714 (IQEKAEAEAK…GKREADKNPE (178 aa)) has biased composition (basic and acidic residues). Residues 720–737 (PLASSEANVDTSKQTNAT) are compositionally biased toward polar residues. Basic and acidic residues predominate over residues 741-754 (VVDKTKVEKLKASE). The segment covering 757–768 (STSSLSSPSHST) has biased composition (low complexity). A phosphoserine mark is found at Ser866 and Ser882. Positions 868–886 (RGMYSSSRQSSRSGSNTHS) are enriched in low complexity. Residue Thr884 is modified to Phosphothreonine. Phosphoserine occurs at positions 886, 911, 919, and 921. A Phosphotyrosine modification is found at Tyr923. The span at 986 to 995 (KLTEKPAETK) shows a compositional bias: basic and acidic residues. Residues 1009–1245 (QRKVKGSLNK…MDVMDSRKNG (237 aa)) form the MIF4G domain. The interval 1266-1403 (AERKKALAES…QKDSNSKTSS (138 aa)) is disordered. Over residues 1284 to 1295 (HGRDMNRGDSRM) the composition is skewed to basic and acidic residues. 3 stretches are compositionally biased toward polar residues: residues 1302–1313 (PPFSSSDWSNNK), 1328–1341 (SGTQGSHGPTSLSS), and 1348–1358 (VSRTPSRQNSA). At Ser1333 the chain carries Phosphoserine. Positions 1383–1403 (LEEHDHDNDGGQKDSNSKTSS) are enriched in basic and acidic residues.

This sequence belongs to the eukaryotic initiation factor 4G family.

The protein localises to the cytoplasm. It localises to the perinuclear region. In terms of biological role, component of the protein complex eIF4F, which is involved in the recognition of the mRNA cap, ATP-dependent unwinding of 5'-terminal secondary structure and recruitment of mRNA to the ribosome. The polypeptide is Eukaryotic translation initiation factor 4 gamma (tif471) (Schizosaccharomyces pombe (strain 972 / ATCC 24843) (Fission yeast)).